Here is a 1703-residue protein sequence, read N- to C-terminus: Mediator of RNA polymerase II transcription subunit 14 (1703 aa).

The segment covering 755–766 (LSQTADLATSSA) has biased composition (polar residues). Positions 755-781 (LSQTADLATSSAGPLLRKDQKPRKRSA) are disordered.

This sequence belongs to the Mediator complex subunit 14 family. Component of the Mediator complex. Interacts with CDKE-1, HDA19 and LUG. Interacts with PTAC12/HMR/PAP5 and PIF4. In terms of tissue distribution, expressed in roots, stems, developing embryos, young leaf primordia, shoot apical meristems, inflorescence meristems, tapetum in anthers, ovules and floral organ primordia, but not in mature organs.

The protein localises to the nucleus. Its function is as follows. Component of the Mediator complex, a coactivator involved in the regulated transcription of nearly all RNA polymerase II-dependent genes. Mediator functions as a bridge to convey information from gene-specific regulatory proteins to the basal RNA polymerase II transcription machinery. The Mediator complex, having a compact conformation in its free form, is recruited to promoters by direct interactions with regulatory proteins and serves for the assembly of a functional pre-initiation complex with RNA polymerase II and the general transcription factors. Binds to G-box (5'-CACGTG-3')-containing regions of target genes promoters (e.g. IAA29 and IAA19). Involved in defining the duration of cell proliferation. Element of a PIF4/HMR/MED14-dependent thermoresponsive process; required for thermomorphogenetic hypocotyl growth in response to daytime warm temperature elicitation by associating to the promoters of thermoresponsive growth-relevant genes (e.g. mainly involved in biosynthesis and signaling of the phytohormone auxin); this also process implies PIF4 and its transcriptional coactivator PTAC12/HMR/PAP5 to promote the expression of target genes. In Arabidopsis thaliana (Mouse-ear cress), this protein is Mediator of RNA polymerase II transcription subunit 14.